Consider the following 510-residue polypeptide: ATP synthase subunit alpha (510 aa).

Residue 169 to 176 (GDRQTGKT) participates in ATP binding.

It belongs to the ATPase alpha/beta chains family. As to quaternary structure, F-type ATPases have 2 components, CF(1) - the catalytic core - and CF(0) - the membrane proton channel. CF(1) has five subunits: alpha(3), beta(3), gamma(1), delta(1), epsilon(1). CF(0) has three main subunits: a(1), b(2) and c(9-12). The alpha and beta chains form an alternating ring which encloses part of the gamma chain. CF(1) is attached to CF(0) by a central stalk formed by the gamma and epsilon chains, while a peripheral stalk is formed by the delta and b chains.

Its subcellular location is the cell inner membrane. It carries out the reaction ATP + H2O + 4 H(+)(in) = ADP + phosphate + 5 H(+)(out). Produces ATP from ADP in the presence of a proton gradient across the membrane. The alpha chain is a regulatory subunit. This Rickettsia peacockii (strain Rustic) protein is ATP synthase subunit alpha.